A 307-amino-acid polypeptide reads, in one-letter code: Bidirectional sugar transporter SWEET11 (307 aa).

Residues 1–14 lie on the Extracellular side of the membrane; it reads MAGGFLSMANPAVT. Residues 15–35 traverse the membrane as a helical segment; it reads LSGVAGNIISFLVFLAPVATF. Residues 17-100 form the MtN3/slv 1 domain; that stretch reads GVAGNIISFL…VLYLVYAPRR (84 aa). The Cytoplasmic segment spans residues 36-47; the sequence is LQVYKKKSTGGY. Residues 48 to 68 traverse the membrane as a helical segment; it reads SSVPYVVALFSSVLWIFYALV. Residues 69 to 74 lie on the Extracellular side of the membrane; the sequence is KTNSRP. The helical transmembrane segment at 75 to 95 threads the bilayer; sequence LLTINAFGCGVEAAYIVLYLV. The Cytoplasmic portion of the chain corresponds to 96 to 107; it reads YAPRRARLRTLA. Residues 108–128 form a helical membrane-spanning segment; the sequence is FFLLLDVAAFALIVVTTLYLV. The Extracellular segment spans residues 129 to 135; the sequence is PKPHQVK. Residues 136 to 156 traverse the membrane as a helical segment; that stretch reads FLGSVCLAFSMAVFVAPLSII. Residues 136 to 219 enclose the MtN3/slv 2 domain; sequence FLGSVCLAFS…MGLYFWYRKP (84 aa). The Cytoplasmic segment spans residues 157–168; the sequence is FKVIKTKSVEFM. A helical membrane pass occupies residues 169–189; that stretch reads PIGLSVCLTLSAVAWFCYGLF. Topologically, residues 190–194 are extracellular; it reads TKDPY. A helical membrane pass occupies residues 195–215; sequence VMYPNVGGFFFSCVQMGLYFW. At 216–307 the chain is on the cytoplasmic side; it reads YRKPRNTAVL…PEVIEITAAV (92 aa).

The protein belongs to the SWEET sugar transporter family. As to quaternary structure, interacts with COPT1 and COPT2. Interacts with APX8. Mostly expressed in panicles and anthers. Also detected in leaves (leaf collar, leaf auricle, leaf ligule), roots, sheaths, culms and culm nodes.

It is found in the cell membrane. Its function is as follows. Mediates both low-affinity uptake and efflux of sugar across the plasma membrane. Required for pollen viability. Involved in the transport of copper, in cooperation with COPT1 and COPT2. Confers sensitivity to bacterial blight mediated by X.oryzae pv. oryzae (Xoo) in its Xa13 allelic form (e.g. cv. IR24), probably by providing the sugar required for the pathogen growth, or by reducing copper contents in xylem. However, a recessive resistance can be associated with the xa13 allele (in which the promoter is mutated leading to reduced induction upon pathogen infection, e.g. cv. IRBB13), specifically toward Xoo Philippine race 6 and Indian race PXO8. This Oryza sativa subsp. japonica (Rice) protein is Bidirectional sugar transporter SWEET11 (SWEET11).